The following is a 1488-amino-acid chain: Chromosome partition protein MukB (1488 aa).

Position 34–41 (34–41) interacts with ATP; sequence GGNGAGKS. 3 coiled-coil regions span residues 326-418, 444-472, and 509-602; these read LEAD…QYNQ, LDTFQAKEQEATEKLLSLEQKMSVAQTAH, and RHLA…QRAP. Positions 666–783 are flexible hinge; the sequence is PGGAEDQRLN…SLPIFGRAAR (118 aa). 3 coiled-coil regions span residues 835–923, 977–1116, and 1209–1265; these read EAEI…AKLE, EMLS…AKAG, and VEAI…LQSV. A disordered region spans residues 1049–1074; it reads ADSGAEERARQRRDELHAQLSNNRSR. Over residues 1051–1065 the composition is skewed to basic and acidic residues; it reads SGAEERARQRRDELH.

It belongs to the SMC family. MukB subfamily. In terms of assembly, homodimerization via its hinge domain. Binds to DNA via its C-terminal region. Interacts, and probably forms a ternary complex, with MukE and MukF via its C-terminal region. The complex formation is stimulated by calcium or magnesium. Interacts with tubulin-related protein FtsZ.

The protein localises to the cytoplasm. Its subcellular location is the nucleoid. Functionally, plays a central role in chromosome condensation, segregation and cell cycle progression. Functions as a homodimer, which is essential for chromosome partition. Involved in negative DNA supercoiling in vivo, and by this means organize and compact chromosomes. May achieve or facilitate chromosome segregation by condensation DNA from both sides of a centrally located replisome during cell division. The polypeptide is Chromosome partition protein MukB (Salmonella paratyphi A (strain ATCC 9150 / SARB42)).